Consider the following 219-residue polypeptide: Probable GTP-binding protein EngB (219 aa).

The region spanning Val-24–Pro-207 is the EngB-type G domain. GTP-binding positions include Gly-32–Ser-39, Gly-59–His-63, Asp-81–Gly-84, Thr-148–Asp-151, and Phe-186–Ala-188. 2 residues coordinate Mg(2+): Ser-39 and Thr-61.

The protein belongs to the TRAFAC class TrmE-Era-EngA-EngB-Septin-like GTPase superfamily. EngB GTPase family. The cofactor is Mg(2+).

In terms of biological role, necessary for normal cell division and for the maintenance of normal septation. The chain is Probable GTP-binding protein EngB from Burkholderia vietnamiensis (strain G4 / LMG 22486) (Burkholderia cepacia (strain R1808)).